The primary structure comprises 374 residues: MGKGASNKKVLERVPITKPPFEYNDLKKAVPPHCFSRPLFRSFYFLLHDIIVTCILFYVASNYIPMLPGFLSYIVWPVYWISQGVFLGRLWMIGHECGHHSFSNYRWVDDSVGFLIHTATLTPYFSFKYSHRNHHAHTNSMEYDEVHIPKRKSEALDLYFEFLGNNPMGLMITMLCKLTFGYAAYIMFNYTGKKHKSGGLASHFYPQSPLFNDSERNHVLFSDVGICIVLYACYRIVMVTGAMSAFYVYGIPWVIMSAILFAATYLQHTHPSIPHYDTTEWNWLRGALSTIDRDLGFFNMNKTHYHVIHHLFPVIPEYHAQEATEAIKPILGQYYKYDGTPFLKALWREMKDCIYVESDQGQKKQGIYWFKNKI.

2 helical membrane-spanning segments follow: residues 50–70 and 74–94; these read IIVTCILFYVASNYIPMLPGF and IVWPVYWISQGVFLGRLWMIG. The Histidine box-1 motif lies at 95–99; the sequence is HECGH. The Histidine box-2 signature appears at 131-135; it reads HRNHH. Helical transmembrane passes span 168–188, 219–239, and 246–266; these read MGLMITMLCKLTFGYAAYIMF, VLFSDVGICIVLYACYRIVMV, and FYVYGIPWVIMSAILFAATYL. A Histidine box-3 motif is present at residues 306–310; that stretch reads HVIHH.

This sequence belongs to the fatty acid desaturase type 1 family. Expressed exclusively in the developing seeds. Not detected in leaves or flower buds.

The protein resides in the microsome membrane. It carries out the reaction a (9Z,12Z)-octadecadienoyl-containing glycerolipid + AH2 + O2 = a (8E,10E,12Z)-octadecatrienoyl-containing glycerolipid + A + 2 H2O. It participates in lipid metabolism; polyunsaturated fatty acid biosynthesis. Its function is as follows. Fatty acid conjugase converting 18:2(9Z, 12Z) to calendic acid 18:3(8E, 10E, 12Z). Converts alpha-linolenic acid (18:3(9Z, 12Z, 15Z)) into 18:4(8E, 10E, 12Z, 15Z). Also has weak activity on the mono-unsaturates 16:1(9Z) and 18:1(9Z) producing two conjugated double bonds at delta(8) and delta(10) position. The sequence is that of Fatty acid conjugase FAC2 A from Calendula officinalis (Pot marigold).